A 996-amino-acid polypeptide reads, in one-letter code: Receptor-like protein kinase HSL1 (996 aa).

The signal sequence occupies residues 1–15 (MYLLFLFLLFPTVFS). The Extracellular portion of the chain corresponds to 16–618 (LNQDGFILQQ…ENEAKKRGYV (603 aa)). LRR repeat units follow at residues 59-83 (FSSV…ICRL), 84-107 (SNLA…IAAC), 109-131 (SLQT…LADI), 133-154 (TLVH…SFGK), 155-178 (FENL…FLGN), 179-203 (ISTL…EFGN), 205-228 (TNLE…LGQL), 229-252 (SKLV…LGGL), 253-276 (TNVV…LGNL), 278-299 (SLRL…ELCR), 300-323 (VPLE…IALS), 325-347 (NLYE…LGLN), 348-371 (SPLR…LCAK), 373-395 (ELEE…LADC), 396-419 (RSLT…FWGL), 421-443 (HVNL…IGGA), 444-467 (SNLS…IGSL), 468-491 (DNLN…LMSL), 493-515 (ELGT…IKSW), 516-539 (KKLN…IGSL), 541-562 (VLNY…SLQS), and 563-586 (LKLN…LAKD). 2 N-linked (GlcNAc...) asparagine glycosylation sites follow: Asn-93 and Asn-97. N-linked (GlcNAc...) asparagine glycans are attached at residues Asn-143, Asn-178, Asn-186, and Asn-203. A glycan (N-linked (GlcNAc...) asparagine) is linked at Asn-262. N-linked (GlcNAc...) asparagine glycans are attached at residues Asn-429 and Asn-445. A glycan (N-linked (GlcNAc...) asparagine) is linked at Asn-569. A helical membrane pass occupies residues 619 to 639 (WLLRSIFVLAAMVLLAGVAWF). Topologically, residues 640 to 996 (YFKYRTFKKA…EDTSDQGSIA (357 aa)) are cytoplasmic. Positions 676–962 (LDEDNVIGAG…RRVVKMLQEI (287 aa)) constitute a Protein kinase domain. ATP-binding positions include 682-690 (IGAGASGKV) and Lys-704. A phosphotyrosine mark is found at Tyr-764 and Tyr-802. Residue Asp-815 is the Proton acceptor of the active site. A Phosphoserine modification is found at Ser-851. 2 positions are modified to phosphotyrosine: Tyr-859 and Tyr-866. Thr-867 is subject to Phosphothreonine. The tract at residues 967–996 (EDSLHKIRDDKDGKLTPYYNEDTSDQGSIA) is disordered. Residues 968–980 (DSLHKIRDDKDGK) are compositionally biased toward basic and acidic residues.

Belongs to the protein kinase superfamily. Ser/Thr protein kinase family.

It localises to the cell membrane. The catalysed reaction is L-seryl-[protein] + ATP = O-phospho-L-seryl-[protein] + ADP + H(+). It carries out the reaction L-threonyl-[protein] + ATP = O-phospho-L-threonyl-[protein] + ADP + H(+). The polypeptide is Receptor-like protein kinase HSL1 (HSL1) (Arabidopsis thaliana (Mouse-ear cress)).